We begin with the raw amino-acid sequence, 196 residues long: UPF0319 protein VV1_0237 (196 aa).

The N-terminal stretch at 1 to 19 is a signal peptide; it reads MKKMMILSALALFSSSLFA.

This sequence belongs to the UPF0319 family.

This chain is UPF0319 protein VV1_0237, found in Vibrio vulnificus (strain CMCP6).